The chain runs to 429 residues: Patatin-like phospholipase domain-containing protein 5 (429 aa).

The 170-residue stretch at 12–181 (LSFSGAGYLG…SNNLPFADCP (170 aa)) folds into the PNPLA domain. The short motif at 16–21 (GAGYLG) is the GXGXXG element. The GXSXG signature appears at 47–51 (GSSSG). The Nucleophile role is filled by Ser-49. Asp-168 functions as the Proton acceptor in the catalytic mechanism. Positions 168-170 (DGA) match the DGA/G motif.

In terms of tissue distribution, expressed in brain and pituitary gland.

The catalysed reaction is a triacylglycerol + H2O = a diacylglycerol + a fatty acid + H(+). Has abundant triacylglycerol lipase activity. The chain is Patatin-like phospholipase domain-containing protein 5 from Homo sapiens (Human).